The primary structure comprises 100 residues: Apolipoprotein C-II (100 aa).

The first 22 residues, 1 to 22 (MGSRFLLALFLVLLVLGCEVQA), serve as a signal peptide directing secretion. The lipid binding stretch occupies residues 66-74 (SVDEKLRDM). Positions 78–100 (SSAAMTTYASIFTDQILTLLKGE) are lipoprotein lipase cofactor.

Belongs to the apolipoprotein C2 family. Proapolipoprotein C-II is synthesized as a sialic acid containing glycoprotein which is subsequently desialylated prior to its proteolytic processing. Post-translationally, proapolipoprotein C-II, the major form found in plasma undergoes proteolytic cleavage of its N-terminal hexapeptide to generate the mature form apolipoprotein C-II, which occurs as the minor form in plasma.

Its subcellular location is the secreted. Component of chylomicrons, very low-density lipoproteins (VLDL), low-density lipoproteins (LDL), and high-density lipoproteins (HDL) in plasma. Plays an important role in lipoprotein metabolism as an activator of lipoprotein lipase. This Ellobius talpinus (Northern mole vole) protein is Apolipoprotein C-II (APOC2).